The primary structure comprises 198 residues: MSEFFWDVQKIQEISNVEEHSVVKCVTVNTSRLISQLNEELQDEESGVNFIVTQLQLLINNVYEKIQKSPGVPAHRSLMINLNFTRLKFSIAYWDILLERSLDLINGPSKTGARYFITEVTPVDRSRYVENNQYFLAFKANQRLTRNSVDMDEFIDFEILIKQIIFDLFKKNGIPDQDFEAILSRFHNLESLVVAFNE.

In terms of biological role, necessary for efficient spore formation. This chain is Sporulation-specific protein 16 (SPO16), found in Saccharomyces cerevisiae (strain ATCC 204508 / S288c) (Baker's yeast).